A 356-amino-acid polypeptide reads, in one-letter code: Epoxide hydrolase B (356 aa).

The AB hydrolase-1 domain maps to 28 to 129 (PLVVLLHGFP…RCAGVVGISV (102 aa)). Asp-104 functions as the Nucleophile in the catalytic mechanism. The Proton acceptor role is filled by His-333.

Belongs to the AB hydrolase superfamily. Epoxide hydrolase family. Homodimer.

The enzyme catalyses an epoxide + H2O = an ethanediol. Could be involved in detoxification of extraneous host-cell epoxides. Catalyzes the hydrolysis of small aromatic epoxide-containing substrates such as trans-1,3-diphenylpropene oxide, trans and cis-stilbene oxide, and terpenoid epoxide. The chain is Epoxide hydrolase B from Mycobacterium tuberculosis (strain CDC 1551 / Oshkosh).